The sequence spans 103 residues: Urease subunit gamma (103 aa).

This sequence belongs to the urease gamma subunit family. As to quaternary structure, heterotrimer of UreA (gamma), UreB (beta) and UreC (alpha) subunits. Three heterotrimers associate to form the active enzyme.

It localises to the cytoplasm. The catalysed reaction is urea + 2 H2O + H(+) = hydrogencarbonate + 2 NH4(+). Its pathway is nitrogen metabolism; urea degradation; CO(2) and NH(3) from urea (urease route): step 1/1. The polypeptide is Urease subunit gamma (Paracoccus denitrificans (strain Pd 1222)).